Here is a 445-residue protein sequence, read N- to C-terminus: Methylenetetrahydrofolate--tRNA-(uracil-5-)-methyltransferase TrmFO (445 aa).

9-14 provides a ligand contact to FAD; sequence GGGLAG.

This sequence belongs to the MnmG family. TrmFO subfamily. Requires FAD as cofactor.

It is found in the cytoplasm. It catalyses the reaction uridine(54) in tRNA + (6R)-5,10-methylene-5,6,7,8-tetrahydrofolate + NADH + H(+) = 5-methyluridine(54) in tRNA + (6S)-5,6,7,8-tetrahydrofolate + NAD(+). The catalysed reaction is uridine(54) in tRNA + (6R)-5,10-methylene-5,6,7,8-tetrahydrofolate + NADPH + H(+) = 5-methyluridine(54) in tRNA + (6S)-5,6,7,8-tetrahydrofolate + NADP(+). Functionally, catalyzes the folate-dependent formation of 5-methyl-uridine at position 54 (M-5-U54) in all tRNAs. The protein is Methylenetetrahydrofolate--tRNA-(uracil-5-)-methyltransferase TrmFO of Rhizorhabdus wittichii (strain DSM 6014 / CCUG 31198 / JCM 15750 / NBRC 105917 / EY 4224 / RW1) (Sphingomonas wittichii).